Here is a 402-residue protein sequence, read N- to C-terminus: CinA-like protein (402 aa).

It belongs to the CinA family.

This Deinococcus deserti (strain DSM 17065 / CIP 109153 / LMG 22923 / VCD115) protein is CinA-like protein.